The following is a 434-amino-acid chain: Protein maelstrom homolog (434 aa).

The segment at residues 4 to 73 is a DNA-binding region (HMG box); that stretch reads RRGSRNAYYF…AQGKDAGPWE (70 aa). The tract at residues 357-387 is disordered; sequence SHFSSSNQEQRSNTPTGDYPSGVKISGQSSS. The segment covering 363–372 has biased composition (polar residues); sequence NQEQRSNTPT.

It belongs to the maelstrom family. Interacts with SMARCB1, SIN3B and DDX4. Interacts with piRNA-associated proteins TDRD1, PIWIL1 and PIWIL2. Interacts with TEX19.

The protein resides in the cytoplasm. It is found in the nucleus. In terms of biological role, plays a central role during spermatogenesis by repressing transposable elements and preventing their mobilization, which is essential for the germline integrity. Acts via the piRNA metabolic process, which mediates the repression of transposable elements during meiosis by forming complexes composed of piRNAs and Piwi proteins and governs the methylation and subsequent repression of transposons. Its association with piP-bodies suggests a participation in the secondary piRNAs metabolic process. Required for the localization of germ-cell factors to the meiotic nuage. This is Protein maelstrom homolog (MAEL) from Sus scrofa (Pig).